The chain runs to 65 residues: Conotoxin Lt5.1 (65 aa).

The first 19 residues, 1-19 (MRCLPVFIILLLLIPSAPS), serve as a signal peptide directing secretion. Residues 20–48 (VDAQRKTKDDVPLASFHDNAKRTLKRLWN) constitute a propeptide that is removed on maturation.

The protein belongs to the conotoxin T superfamily. Contains 2 disulfide bonds that can be either 'C1-C3, C2-C4' or 'C1-C4, C2-C3', since these disulfide connectivities have been observed for conotoxins with cysteine framework V (for examples, see AC P0DQQ7 and AC P81755). In terms of tissue distribution, expressed by the venom duct.

The protein resides in the secreted. The sequence is that of Conotoxin Lt5.1 from Conus litteratus (Lettered cone).